The primary structure comprises 256 residues: 5-oxoprolinase subunit A (256 aa).

Belongs to the LamB/PxpA family. Forms a complex composed of PxpA, PxpB and PxpC.

The catalysed reaction is 5-oxo-L-proline + ATP + 2 H2O = L-glutamate + ADP + phosphate + H(+). Its function is as follows. Catalyzes the cleavage of 5-oxoproline to form L-glutamate coupled to the hydrolysis of ATP to ADP and inorganic phosphate. The chain is 5-oxoprolinase subunit A from Cutibacterium acnes (strain DSM 16379 / KPA171202) (Propionibacterium acnes).